Reading from the N-terminus, the 158-residue chain is Cyclic pyranopterin monophosphate synthase (158 aa).

Residues 75–77 and 113–114 each bind substrate; these read LCH and ME. Aspartate 128 is an active-site residue.

This sequence belongs to the MoaC family. Homohexamer; trimer of dimers.

It carries out the reaction (8S)-3',8-cyclo-7,8-dihydroguanosine 5'-triphosphate = cyclic pyranopterin phosphate + diphosphate. The protein operates within cofactor biosynthesis; molybdopterin biosynthesis. In terms of biological role, catalyzes the conversion of (8S)-3',8-cyclo-7,8-dihydroguanosine 5'-triphosphate to cyclic pyranopterin monophosphate (cPMP). The chain is Cyclic pyranopterin monophosphate synthase from Roseiflexus castenholzii (strain DSM 13941 / HLO8).